The primary structure comprises 210 residues: MVACVIKDWQGSEVGETALELRVAKAENAAHIVHRALRRQMANARQGTASTKTRAEVRGGGRKPWRQKGTGRARAGSNRSPLWRGGGVIFGPKPRDYSIKMNYKERRLALRTALISRSDSLIVVEDFSDKLPRPKTKELAAAIARWGVQPNDKVLLIVADKQDTIYLSARNIATVKLIQATSLNVFDLLNADWIVATVEALGKIQEVYGG.

The interval 41–79 (MANARQGTASTKTRAEVRGGGRKPWRQKGTGRARAGSNR) is disordered. The span at 43–52 (NARQGTASTK) shows a compositional bias: polar residues. The span at 60 to 71 (GGRKPWRQKGTG) shows a compositional bias: basic residues.

This sequence belongs to the universal ribosomal protein uL4 family. Part of the 50S ribosomal subunit.

Functionally, one of the primary rRNA binding proteins, this protein initially binds near the 5'-end of the 23S rRNA. It is important during the early stages of 50S assembly. It makes multiple contacts with different domains of the 23S rRNA in the assembled 50S subunit and ribosome. Its function is as follows. Forms part of the polypeptide exit tunnel. This Cyanothece sp. (strain PCC 7425 / ATCC 29141) protein is Large ribosomal subunit protein uL4.